The following is an 89-amino-acid chain: MSSLDKTMYFDFDNDSVKDVHDTLTTVYEALQEKGYNPINQIVGYLLSGDPAYIPRLKDARNLIRKHQRDEIIEELVKSYLKADKDVDA.

This sequence belongs to the UPF0297 family.

The sequence is that of UPF0297 protein lp_2275 from Lactiplantibacillus plantarum (strain ATCC BAA-793 / NCIMB 8826 / WCFS1) (Lactobacillus plantarum).